The chain runs to 347 residues: Terpene synthase 2 (347 aa).

4 residues coordinate Mg(2+): Asp-103, Asn-247, Ser-251, and Glu-255. Positions 103-107 (DDLLE) match the D(D/E)XX(D/E) motif motif. An NSE motif motif is present at residues 247–255 (NDIFSLKKE). The WxxxxxRY motif signature appears at 329-336 (WCSKSTRY).

Belongs to the terpene synthase family. Mg(2+) is required as a cofactor.

Terpene synthase that may be involved in the production of volatile terpenoids. Does not show detectable terpene products with either farnesyl diphosphate (FPP) or geranyl diphosphate (GPP). P.polycephalum has a unique biology and these volatile terpenoids could function in internal communication of P.polycephalum, to mark the territory that have been explored, or they may be involved in chemotaxis. This chain is Terpene synthase 2, found in Physarum polycephalum (Slime mold).